Consider the following 193-residue polypeptide: dITP/XTP pyrophosphatase (193 aa).

Substrate is bound at residue 7–12 (SENENK). The active-site Proton acceptor is Asp-65. Asp-65 provides a ligand contact to Mg(2+). Substrate contacts are provided by residues Ser-66, 144–147 (FGYD), Lys-167, and 172–173 (HR).

It belongs to the HAM1 NTPase family. In terms of assembly, homodimer. Mg(2+) serves as cofactor.

It carries out the reaction XTP + H2O = XMP + diphosphate + H(+). It catalyses the reaction dITP + H2O = dIMP + diphosphate + H(+). The enzyme catalyses ITP + H2O = IMP + diphosphate + H(+). Pyrophosphatase that catalyzes the hydrolysis of nucleoside triphosphates to their monophosphate derivatives, with a high preference for the non-canonical purine nucleotides XTP (xanthosine triphosphate), dITP (deoxyinosine triphosphate) and ITP. Seems to function as a house-cleaning enzyme that removes non-canonical purine nucleotides from the nucleotide pool, thus preventing their incorporation into DNA/RNA and avoiding chromosomal lesions. The chain is dITP/XTP pyrophosphatase from Tropheryma whipplei (strain Twist) (Whipple's bacillus).